Here is a 189-residue protein sequence, read N- to C-terminus: Ribosome maturation factor RimP (189 aa).

This sequence belongs to the RimP family.

It is found in the cytoplasm. Its function is as follows. Required for maturation of 30S ribosomal subunits. This Corynebacterium kroppenstedtii (strain DSM 44385 / JCM 11950 / CIP 105744 / CCUG 35717) protein is Ribosome maturation factor RimP.